The primary structure comprises 402 residues: Pyridinium-3,5-bisthiocarboxylic acid mononucleotide nickel insertion protein (402 aa).

Belongs to the LarC family.

The catalysed reaction is Ni(II)-pyridinium-3,5-bisthiocarboxylate mononucleotide = pyridinium-3,5-bisthiocarboxylate mononucleotide + Ni(2+). In terms of biological role, involved in the biosynthesis of a nickel-pincer cofactor ((SCS)Ni(II) pincer complex). Binds Ni(2+), and functions in nickel delivery to pyridinium-3,5-bisthiocarboxylic acid mononucleotide (P2TMN), to form the mature cofactor. Is thus probably required for the activation of nickel-pincer cofactor-dependent enzymes. The polypeptide is Pyridinium-3,5-bisthiocarboxylic acid mononucleotide nickel insertion protein (Thermotoga sp. (strain RQ2)).